Reading from the N-terminus, the 344-residue chain is F17d-G fimbrial adhesin (344 aa).

The N-terminal stretch at 1–22 (MTNFYKVFLAVFILVCCNISQA) is a signal peptide. The receptor-binding lectin domain stretch occupies residues 23-199 (AVSFIGSTEN…SLNPFTLNDT (177 aa)). Residues 65–66 (AN), 110–111 (DT), and 139–142 (STQG) contribute to the a carbohydrate site. The cysteines at positions 75 and 132 are disulfide-linked. Residues 200 to 344 (VTSCRLLTPS…GISTFTFSYQ (145 aa)) are fimbrillin-binding domain. The disordered stretch occupies residues 288 to 308 (LKFGPDSPVKGNENQWQLSTG). Over residues 299-308 (NENQWQLSTG) the composition is skewed to polar residues.

This sequence belongs to the fimbrial protein family.

The protein localises to the fimbrium. Its function is as follows. Essential fimbrial adhesion factor that mediates binding to N-acetylglucosamine-containing receptors in the host intestinal microvilli, leading to colonization of the intestinal tissue, and diarrhea or septicemia. Also confers adhesiveness to laminin and basement membranes. The polypeptide is F17d-G fimbrial adhesin (f17dG) (Escherichia coli).